The chain runs to 292 residues: MENNIENFDPSLVYFGDRGQDFKKMIRSILSLGMSDEYIPYLTTPESLNTYNTAFTSRGADDKNNYEMFEQLGDVSVNKFIVNYMYKRFPQLRNPNGVDVVAKLKIKYASKNQLQMLSESLDMWRFITATYDERTNKKKPLLEDTFESFFGATEWLIDSFIEDIALKQGNNNTYVGVGYNIINGILTTLFDRINISLKYENLVDAKTRFNEVIAEQKSIIGDVKYEDEYKNGKHTSKIYRYPPNSNLKELLGIGTGTLKRDAQEQAASRALETLALKHNIIKEAPDRFKAFM.

One can recognise an RNase III domain in the interval 32–158; that stretch reads LGMSDEYIPY…FFGATEWLID (127 aa). The 73-residue stretch at 204–276 folds into the DRBM domain; that stretch reads DAKTRFNEVI…ASRALETLAL (73 aa).

Belongs to the IIV-6 142R family.

The enzyme catalyses Endonucleolytic cleavage to 5'-phosphomonoester.. In terms of biological role, digests double-stranded RNA. This chain is Putative ribonuclease 3, found in Acheta domesticus (House cricket).